The sequence spans 123 residues: Small ribosomal subunit protein uS12cz/uS12cy (123 aa).

The protein belongs to the universal ribosomal protein uS12 family. As to quaternary structure, part of the 30S ribosomal subunit.

Its subcellular location is the plastid. It localises to the chloroplast. Functionally, with S4 and S5 plays an important role in translational accuracy. Located at the interface of the 30S and 50S subunits. In Citrus sinensis (Sweet orange), this protein is Small ribosomal subunit protein uS12cz/uS12cy (rps12-A).